The chain runs to 238 residues: 3-dehydroquinate dehydratase (238 aa).

Residues 35 to 37 (ELR) and arginine 70 each bind 3-dehydroquinate. Histidine 133 functions as the Proton donor/acceptor in the catalytic mechanism. The active-site Schiff-base intermediate with substrate is lysine 160. 3-dehydroquinate contacts are provided by arginine 202 and glutamine 225.

Belongs to the type-I 3-dehydroquinase family. As to quaternary structure, homodimer.

It catalyses the reaction 3-dehydroquinate = 3-dehydroshikimate + H2O. Its pathway is metabolic intermediate biosynthesis; chorismate biosynthesis; chorismate from D-erythrose 4-phosphate and phosphoenolpyruvate: step 3/7. In terms of biological role, involved in the third step of the chorismate pathway, which leads to the biosynthesis of aromatic amino acids. Catalyzes the cis-dehydration of 3-dehydroquinate (DHQ) and introduces the first double bond of the aromatic ring to yield 3-dehydroshikimate. The polypeptide is 3-dehydroquinate dehydratase (Staphylococcus aureus (strain MRSA252)).